We begin with the raw amino-acid sequence, 1123 residues long: Ubiquitin carboxyl-terminal hydrolase 43 (1123 aa).

Residues Met-1–Gly-102 form a disordered region. A compositionally biased stretch (basic residues) spans Arg-17 to Phe-28. The segment covering Ser-29–Ser-39 has biased composition (low complexity). One can recognise a USP domain in the interval Gln-101–Arg-710. The Nucleophile role is filled by Cys-110. The disordered stretch occupies residues Glu-202–Ser-221. Residue His-668 is the Proton acceptor of the active site. Arg-746 is subject to Asymmetric dimethylarginine. 4 disordered regions span residues Ile-795–Pro-826, Thr-854–Gly-886, Phe-959–Glu-1049, and Ser-1068–Tyr-1099. Phosphoserine is present on Ser-969. Over residues Lys-979 to Arg-990 the composition is skewed to basic and acidic residues. Positions Val-1016–Ser-1027 are enriched in low complexity. Ser-1041 carries the phosphoserine modification.

Belongs to the peptidase C19 family. As to expression, expressed in brain, aorta and lung at low levels.

The enzyme catalyses Thiol-dependent hydrolysis of ester, thioester, amide, peptide and isopeptide bonds formed by the C-terminal Gly of ubiquitin (a 76-residue protein attached to proteins as an intracellular targeting signal).. In terms of biological role, may recognize and hydrolyze the peptide bond at the C-terminal Gly of ubiquitin. Involved in the processing of poly-ubiquitin precursors as well as that of ubiquitinated proteins. The polypeptide is Ubiquitin carboxyl-terminal hydrolase 43 (USP43) (Homo sapiens (Human)).